A 586-amino-acid polypeptide reads, in one-letter code: Ezrin (586 aa).

An FERM domain is found at 2 to 295 (PKPINVRVTT…GNHELYMRRR (294 aa)). Position 60 is an N6-acetyllysine (lysine 60). The [IL]-x-C-x-x-[DE] motif signature appears at 115–120 (IYCPPE). The residue at position 146 (tyrosine 146) is a Phosphotyrosine; by PDGFR. An interaction with SCYL3 region spans residues 244–586 (EIRNISFNDK…KQRIDEFEAM (343 aa)). Residues 302–462 (VQQMKAQARE…QDDLVKTKEE (161 aa)) adopt a coiled-coil conformation. Residues 305-340 (MKAQAREEKHQKQLERQQLESEKKRREAVEQEKEQM) are disordered. Residues 308-340 (QAREEKHQKQLERQQLESEKKRREAVEQEKEQM) show a composition bias toward basic and acidic residues. At tyrosine 354 the chain carries Phosphotyrosine; by PDGFR. Position 366 is a phosphoserine (serine 366). Tyrosine 478 carries the post-translational modification Phosphotyrosine. The residue at position 535 (serine 535) is a Phosphoserine. Threonine 567 carries the phosphothreonine; by ROCK2 and PKC/PRKCI modification.

In terms of assembly, interacts with PALS1. Found in a complex with EZR, PODXL and NHERF2. Interacts with MCC, PLEKHG6, PODXL, SCYL3/PACE1, NHERF1, NHERF2 and TMEM8B. Interacts (when phosphorylated) with FES/FPS. Interacts with dimeric S100P, the interaction may be activating through unmasking of F-actin binding sites. Identified in complexes that contain VIM, EZR, AHNAK, BFSP1, BFSP2, ANK2, PLEC, PRX and spectrin. Detected in a complex composed of at least EZR, AHNAK, PPL and PRX. Interacts with PDPN (via cytoplasmic domain); activates RHOA and promotes epithelial-mesenchymal transition. Interacts with SPN/CD43 cytoplasmic tail, CD44 and ICAM2. Interacts with SLC9A3; interaction targets SLC9A3 to the apical membrane. Interacts with SLC9A1; regulates interactions of SLC9A1 with cytoskeletal and promotes stress fiber formation. Interacts with CLIC5; may work together in a complex which also includes RDX and MYO6 to stabilize linkages between the plasma membrane and subjacent actin cytoskeleton at the base of stereocilia. Post-translationally, phosphorylated by tyrosine-protein kinases. Phosphorylation by ROCK2 suppresses the head-to-tail association of the N-terminal and C-terminal halves resulting in an opened conformation which is capable of actin and membrane-binding. S-nitrosylation is induced by interferon-gamma and oxidatively-modified low-densitity lipoprotein (LDL(ox)) possibly implicating the iNOS-S100A8/9 transnitrosylase complex.

Its subcellular location is the apical cell membrane. The protein localises to the cell projection. It localises to the microvillus membrane. The protein resides in the ruffle membrane. It is found in the cytoplasm. Its subcellular location is the cell cortex. The protein localises to the cytoskeleton. It localises to the microvillus. With respect to regulation, a head-to-tail association, of the N-terminal and C-terminal halves results in a closed conformation (inactive form) which is incapable of actin or membrane-binding. Its function is as follows. Probably involved in connections of major cytoskeletal structures to the plasma membrane. In epithelial cells, required for the formation of microvilli and membrane ruffles on the apical pole. Along with PLEKHG6, required for normal macropinocytosis. In Oryctolagus cuniculus (Rabbit), this protein is Ezrin (EZR).